We begin with the raw amino-acid sequence, 309 residues long: Homoserine kinase (309 aa).

91-101 lines the ATP pocket; that stretch reads PIGSGLGSSAC.

The protein belongs to the GHMP kinase family. Homoserine kinase subfamily.

It localises to the cytoplasm. It catalyses the reaction L-homoserine + ATP = O-phospho-L-homoserine + ADP + H(+). The protein operates within amino-acid biosynthesis; L-threonine biosynthesis; L-threonine from L-aspartate: step 4/5. Catalyzes the ATP-dependent phosphorylation of L-homoserine to L-homoserine phosphate. This is Homoserine kinase from Citrobacter koseri (strain ATCC BAA-895 / CDC 4225-83 / SGSC4696).